A 120-amino-acid polypeptide reads, in one-letter code: NAD(P)H-quinone oxidoreductase subunit 3, chloroplastic (120 aa).

3 helical membrane-spanning segments follow: residues 10 to 30 (FWAF…ISGV), 64 to 84 (MFAL…PWAM), and 88 to 108 (VLGV…IGGL).

The protein belongs to the complex I subunit 3 family. NDH is composed of at least 16 different subunits, 5 of which are encoded in the nucleus.

The protein resides in the plastid. It is found in the chloroplast thylakoid membrane. The enzyme catalyses a plastoquinone + NADH + (n+1) H(+)(in) = a plastoquinol + NAD(+) + n H(+)(out). It carries out the reaction a plastoquinone + NADPH + (n+1) H(+)(in) = a plastoquinol + NADP(+) + n H(+)(out). Functionally, NDH shuttles electrons from NAD(P)H:plastoquinone, via FMN and iron-sulfur (Fe-S) centers, to quinones in the photosynthetic chain and possibly in a chloroplast respiratory chain. The immediate electron acceptor for the enzyme in this species is believed to be plastoquinone. Couples the redox reaction to proton translocation, and thus conserves the redox energy in a proton gradient. The sequence is that of NAD(P)H-quinone oxidoreductase subunit 3, chloroplastic from Ipomoea purpurea (Common morning glory).